Consider the following 140-residue polypeptide: Small ribosomal subunit protein uS19 (140 aa).

Residues 120 to 140 (RPKHSAPGIGATRSSAHVSKK) are disordered. The segment covering 131–140 (TRSSAHVSKK) has biased composition (polar residues).

It belongs to the universal ribosomal protein uS19 family.

Functionally, protein S19 forms a complex with S13 that binds strongly to the 16S ribosomal RNA. The protein is Small ribosomal subunit protein uS19 of Nanoarchaeum equitans (strain Kin4-M).